A 145-amino-acid polypeptide reads, in one-letter code: D-aminoacyl-tRNA deacylase (145 aa).

The Gly-cisPro motif, important for rejection of L-amino acids signature appears at 137–138 (GP).

The protein belongs to the DTD family. As to quaternary structure, homodimer.

The protein localises to the cytoplasm. The enzyme catalyses glycyl-tRNA(Ala) + H2O = tRNA(Ala) + glycine + H(+). It carries out the reaction a D-aminoacyl-tRNA + H2O = a tRNA + a D-alpha-amino acid + H(+). Functionally, an aminoacyl-tRNA editing enzyme that deacylates mischarged D-aminoacyl-tRNAs. Also deacylates mischarged glycyl-tRNA(Ala), protecting cells against glycine mischarging by AlaRS. Acts via tRNA-based rather than protein-based catalysis; rejects L-amino acids rather than detecting D-amino acids in the active site. By recycling D-aminoacyl-tRNA to D-amino acids and free tRNA molecules, this enzyme counteracts the toxicity associated with the formation of D-aminoacyl-tRNA entities in vivo and helps enforce protein L-homochirality. The polypeptide is D-aminoacyl-tRNA deacylase (Francisella tularensis subsp. holarctica (strain LVS)).